We begin with the raw amino-acid sequence, 297 residues long: ABSCISIC ACID-INSENSITIVE 5-like protein 2 (297 aa).

Phosphoserine is present on residues serine 21, serine 43, and serine 81. Disordered stretches follow at residues 100–119 (IQQN…QPTL) and 138–157 (IPGS…SGAG). Threonine 118 carries the post-translational modification Phosphothreonine. Gly residues predominate over residues 146 to 157 (PVGGGSAGSGAG). Residues 225–288 (VERRQKRMIK…SVPPPDPKRQ (64 aa)) form the bZIP domain. Positions 227–246 (RRQKRMIKNRESAARSRARK) are basic motif. The segment at 253 to 267 (LEIKVSRLEEENERL) is leucine-zipper. Residues 272 to 297 (EVEKILPSVPPPDPKRQLRRTSSAPF) are disordered.

It belongs to the bZIP family. ABI5 subfamily. In terms of assembly, DNA-binding heterodimer with ABI5/DPBF1, DPBF2 or EEL/DPBF4. Interacts with the AFP proteins AFP1, AFP2, AFP3 and AFP4. Predominantly expressed in seeds.

The protein localises to the nucleus. In terms of biological role, binds to the embryo specification element and the ABA-responsive element (ABRE) of the Dc3 gene promoter. Could participate in abscisic acid-regulated gene expression during seed development. The protein is ABSCISIC ACID-INSENSITIVE 5-like protein 2 (DPBF3) of Arabidopsis thaliana (Mouse-ear cress).